The following is a 181-amino-acid chain: Large ribosomal subunit protein uL6 (181 aa).

It belongs to the universal ribosomal protein uL6 family. In terms of assembly, part of the 50S ribosomal subunit.

This protein binds to the 23S rRNA, and is important in its secondary structure. It is located near the subunit interface in the base of the L7/L12 stalk, and near the tRNA binding site of the peptidyltransferase center. This Vesicomyosocius okutanii subsp. Calyptogena okutanii (strain HA) protein is Large ribosomal subunit protein uL6.